Here is a 707-residue protein sequence, read N- to C-terminus: Transcription factor 12 (707 aa).

The interval 25-109 (AMFSPPVNSG…TPFMNSNLIG (85 aa)) is disordered. 2 stretches are compositionally biased toward polar residues: residues 30 to 48 (PVNS…QFSG) and 56 to 76 (GTTS…SRGF). 3 positions are modified to phosphoserine: Ser-47, Ser-67, and Ser-79. Over residues 81-93 (HYSDHLNDSRLGT) the composition is skewed to basic and acidic residues. Ser-98 carries the post-translational modification Phosphoserine. Residue Lys-110 forms a Glycyl lysine isopeptide (Lys-Gly) (interchain with G-Cter in SUMO2) linkage. A phosphoserine mark is found at Ser-116 and Ser-124. A leucine-zipper region spans residues 119 to 140 (LYSRDSGLSGCQSSLLRQDLGL). Disordered regions lie at residues 140–222 (LGSP…SMFA) and 249–313 (FGGI…ASHT). A compositionally biased stretch (polar residues) spans 144–163 (AQLSSSGKPGTPYYSFSATS). Lys-181 is covalently cross-linked (Glycyl lysine isopeptide (Lys-Gly) (interchain with G-Cter in SUMO2)). Residues 256–269 (STSHMSQSSSYGSL) show a composition bias toward low complexity. The segment covering 282–306 (VSPTDINTSLPPMSSFHRGSTSSSP) has biased composition (polar residues). A Phosphothreonine modification is found at Thr-313. Residue Ser-333 is modified to Phosphoserine. Disordered regions lie at residues 349-393 (PDHT…YENS) and 521-605 (HKTP…ERRM). Residues 352-363 (TSSSFPSNPSTP) show a composition bias toward low complexity. Polar residues-rich tracts occupy residues 364–377 (VGSP…TSQW) and 384–393 (APSSPSYENS). Basic and acidic residues-rich tracts occupy residues 543–555 (IKTE…ENLH) and 561–576 (DDMK…DIKV). Lys-544 participates in a covalent cross-link: Glycyl lysine isopeptide (Lys-Gly) (interchain with G-Cter in SUMO2). Residue Ser-565 is modified to Phosphoserine. Lys-575 participates in a covalent cross-link: Glycyl lysine isopeptide (Lys-Gly) (interchain with G-Cter in SUMO2). Phosphothreonine is present on Thr-582. 2 positions are modified to phosphoserine: Ser-583 and Ser-584. The segment covering 593–605 (PEQKIEREKERRM) has biased composition (basic and acidic residues). A bHLH domain is found at 602–655 (ERRMANNARERLRVRDINEAFKELGRMCQLHLKSEKPQTKLLILHQAVAVILSL). Glycyl lysine isopeptide (Lys-Gly) (interchain with G-Cter in SUMO2) cross-links involve residues Lys-634 and Lys-678. A class A specific domain region spans residues 657–680 (QQVRERNLNPKAACLKRREEEKVS). Residues 675–707 (EEEKVSAASAEPPTTLPGTHPGLSETTNPMGHL) form a disordered region. Low complexity predominate over residues 686–697 (PPTTLPGTHPGL). The span at 698 to 707 (SETTNPMGHL) shows a compositional bias: polar residues.

In terms of assembly, efficient DNA binding requires dimerization with another bHLH protein. Forms homo- or heterooligomers with myogenin, E12 and ITF2 proteins. Interacts with PTF1. Interacts with RUNX1T1. Interacts with NEUROD2. Interacts with BHLHA9. As to expression, isoform gamma is highly expressed in lung, kidney, spleen, and is expressed at reduced levels in heart, muscle, liver, pituitary, brain and the trigeminal ganglion. The expression of isoform alpha predominates over isoform gamma in the pituitary and the brain.

It localises to the nucleus. Transcriptional regulator. Involved in the initiation of neuronal differentiation. Activates transcription by binding to the E box (5'-CANNTG-3'). May be involved in the functional network that regulates the development of the GnRH axis. In Rattus norvegicus (Rat), this protein is Transcription factor 12 (Tcf12).